A 380-amino-acid polypeptide reads, in one-letter code: O-antigen polymerase (380 aa).

The next 12 helical transmembrane spans lie at 1-21, 27-47, 55-75, 94-114, 132-152, 169-189, 201-221, 229-249, 282-302, 306-326, 332-352, and 353-373; these read MTYF…RLTP, NIVL…TFNE, ATTL…YILI, YIYW…IILL, SISG…MYLA, FLLA…VYIV, LIYG…LGKF, IISA…AAFN, ILPW…FAPW, LGLY…GIWF, LAVG…FFQE, and HYLL…LLAM.

It localises to the cell inner membrane. It catalyses the reaction n lipid-linked O-antigen repeat units = a lipid-linked O antigen + (n-1) polyisoprenyl diphosphate.. The protein operates within bacterial outer membrane biogenesis; LPS O-antigen biosynthesis. In terms of biological role, polymerase involved in the biosynthesis of the lipopolysaccharide (LPS). Catalyzes the polymerization of the O-antigen repeat units on the periplasmic face of the inner membrane, leading to the formation of the lipid-linked O-antigen molecule. The sequence is that of O-antigen polymerase from Shigella dysenteriae.